We begin with the raw amino-acid sequence, 129 residues long: DNA base-flipping protein (129 aa).

Belongs to the MGMT family. ATL subfamily. Interacts with HelD and UvrA.

Functionally, involved in DNA damage recognition. Binds DNA containing O(6)-methylguanine and larger O(6)-alkylguanine adducts, and to double-stranded DNA that contains an AP (apurinic/apyrimidinic) site. Binds to the damaged base and flips the base out of the DNA duplex into an extrahelical conformation, which allows processing by repair proteins. Works in partnership with the nucleotide excision repair (NER) pathway to enhance the repair of the O(6)-alkylguanine adducts larger than the methyl adduct. Also prevents methyl-directed mismatch repair (MMR)-mediated attack of the O(6)-alkylguanine:T mispairs for the larger alkyl groups. This Escherichia coli (strain K12) protein is DNA base-flipping protein.